A 359-amino-acid chain; its full sequence is 3-dehydroquinate synthase (359 aa).

NAD(+) contacts are provided by residues 72 to 77 (EGEIHK), 106 to 110 (GVIGD), 130 to 131 (TS), Lys-143, Lys-152, and 170 to 173 (CLKT). Zn(2+) is bound by residues Glu-185, His-248, and His-264.

This sequence belongs to the sugar phosphate cyclases superfamily. Dehydroquinate synthase family. Co(2+) is required as a cofactor. Requires Zn(2+) as cofactor. NAD(+) serves as cofactor.

It is found in the cytoplasm. The catalysed reaction is 7-phospho-2-dehydro-3-deoxy-D-arabino-heptonate = 3-dehydroquinate + phosphate. It participates in metabolic intermediate biosynthesis; chorismate biosynthesis; chorismate from D-erythrose 4-phosphate and phosphoenolpyruvate: step 2/7. Functionally, catalyzes the conversion of 3-deoxy-D-arabino-heptulosonate 7-phosphate (DAHP) to dehydroquinate (DHQ). This is 3-dehydroquinate synthase from Dehalococcoides mccartyi (strain ATCC BAA-2100 / JCM 16839 / KCTC 5957 / BAV1).